We begin with the raw amino-acid sequence, 294 residues long: MSWLEKIFNTSNIVSSRKASIPEGVWTKCTSCEQVLYSAELERNLEVCPKCDHHMRMKARKRLETFLDAEGRVEIGAELEPKDVLKFKDSKRYKDRISAAQKSSEETDALVVMKGTLLELPVVACAFEFSFMGGSMGSVVGARFVKAVDAAIENNCPLVCFSASGGARMQEALMSLMQMAKTSAALARLSRKGLPFFSVLTDPTMGGVSASLAMLGDINIGEPKALIGFAGRRVIEQTVREDLPEGFQRSEFLLEHGAIDMIVDRREMRQRIGGLMAKMTNQESPLVVPVDGSH.

The CoA carboxyltransferase N-terminal domain maps to 25–294 (VWTKCTSCEQ…PLVVPVDGSH (270 aa)). Residues Cys-29, Cys-32, Cys-48, and Cys-51 each coordinate Zn(2+). The C4-type zinc-finger motif lies at 29 to 51 (CTSCEQVLYSAELERNLEVCPKC).

It belongs to the AccD/PCCB family. Acetyl-CoA carboxylase is a heterohexamer composed of biotin carboxyl carrier protein (AccB), biotin carboxylase (AccC) and two subunits each of ACCase subunit alpha (AccA) and ACCase subunit beta (AccD). Zn(2+) is required as a cofactor.

It is found in the cytoplasm. The enzyme catalyses N(6)-carboxybiotinyl-L-lysyl-[protein] + acetyl-CoA = N(6)-biotinyl-L-lysyl-[protein] + malonyl-CoA. It participates in lipid metabolism; malonyl-CoA biosynthesis; malonyl-CoA from acetyl-CoA: step 1/1. Its function is as follows. Component of the acetyl coenzyme A carboxylase (ACC) complex. Biotin carboxylase (BC) catalyzes the carboxylation of biotin on its carrier protein (BCCP) and then the CO(2) group is transferred by the transcarboxylase to acetyl-CoA to form malonyl-CoA. The chain is Acetyl-coenzyme A carboxylase carboxyl transferase subunit beta from Aliivibrio fischeri (strain ATCC 700601 / ES114) (Vibrio fischeri).